Consider the following 583-residue polypeptide: GTP diphosphokinase CRSH1, chloroplastic (583 aa).

Over residues 1–13 the composition is skewed to low complexity; sequence MATAATTSAAAIP. Positions 1-68 are disordered; it reads MATAATTSAA…SSSSSTPAEG (68 aa). A chloroplast-targeting transit peptide spans 1–69; the sequence is MATAATTSAA…SSSSTPAEGG (69 aa). A compositionally biased stretch (basic residues) spans 19–39; it reads RRQHPHPRRPGLRPRRLHRLR. The segment covering 40-66 has biased composition (low complexity); sequence LPAQAAAAAAASSPSTSSSSSSSSTPA. One can recognise an HD domain in the interval 119–219; sequence ALARALAIAA…LELALKLDMM (101 aa). EF-hand domains are found at residues 473–508 and 510–542; these read GDSNCTNRAFCQLDKNGDGRISIEELTEVMEDLGAG and KDAKELMHLLDANSDGSLSSDEFEAFQRQIELM. Residues Asp-486, Asn-488, Asp-490, Arg-492, Glu-497, Asp-520, Asn-522, Asp-524, Ser-526, and Glu-531 each contribute to the Ca(2+) site.

This sequence belongs to the RelA/SpoT family. Expressed in roots and shoots.

The protein localises to the plastid. It localises to the chloroplast. The enzyme catalyses GTP + ATP = guanosine 3'-diphosphate 5'-triphosphate + AMP. Activated by calcium. Possesses calcium-dependent ppGpp (guanosine 3'-diphosphate 5'-diphosphate) synthetase activity in vitro and is able to functionally complement E.coli relA mutants. May be involved in a rapid plant ppGpp-mediated response to pathogens and other stresses. The sequence is that of GTP diphosphokinase CRSH1, chloroplastic from Oryza sativa subsp. japonica (Rice).